The following is a 318-amino-acid chain: MALKELRIGTRASQLALWQANWVKSELEKRYPDMTVTLTKIKTIGDKILDVPLAQVGGKGLFVKEIEEAMLRGEIDIAVHSMKDVPTEFPEGLGLYCITEREDPRDAVISNGVKFADLPQGARIGTSALRRQAQLLKVRPDLEMVIIRGNVQTRMDKLKTEGLDAVILAAAGLNRLGFADQITEMLPTDLSLPAIGQGALGIECNLSNQDVKDAISFFNSPDTSRAVRAERALLWRCEGGCQVPIAAFGEVTGDQLKLTGFIASVDGKVSVKGVVTGPADDCEKLGVKLAEQLLSEGGHAILAEVYQREVSREKEIPV.

The residue at position 241 (Cys241) is an S-(dipyrrolylmethanemethyl)cysteine.

The protein belongs to the HMBS family. In terms of assembly, monomer. Dipyrromethane serves as cofactor.

It catalyses the reaction 4 porphobilinogen + H2O = hydroxymethylbilane + 4 NH4(+). The protein operates within porphyrin-containing compound metabolism; protoporphyrin-IX biosynthesis; coproporphyrinogen-III from 5-aminolevulinate: step 2/4. Functionally, tetrapolymerization of the monopyrrole PBG into the hydroxymethylbilane pre-uroporphyrinogen in several discrete steps. The polypeptide is Porphobilinogen deaminase (Citrifermentans bemidjiense (strain ATCC BAA-1014 / DSM 16622 / JCM 12645 / Bem) (Geobacter bemidjiensis)).